The following is a 224-amino-acid chain: Mammalian ependymin-related protein 1 (224 aa).

Residues 1–37 form the signal peptide; the sequence is MPGRAPLHTVPGALGPWLLGCLWAWTLCGLCSLGAVG. Intrachain disulfides connect Cys42-Cys172, Cys88-Cys222, and Cys113-Cys210. 2 N-linked (GlcNAc...) asparagine glycosylation sites follow: Asn130 and Asn182.

It belongs to the ependymin family. In terms of assembly, homodimer. Post-translationally, N-glycosylated; the glycan contains mannose-6-phosphate moieties.

It localises to the lysosome lumen. The protein resides in the secreted. Its function is as follows. Binds anionic lipids and gangliosides at acidic pH. The chain is Mammalian ependymin-related protein 1 (EPDR1) from Macaca fascicularis (Crab-eating macaque).